The chain runs to 268 residues: uncharacterized protein (268 aa).

This is an uncharacterized protein from Methanocaldococcus jannaschii (strain ATCC 43067 / DSM 2661 / JAL-1 / JCM 10045 / NBRC 100440) (Methanococcus jannaschii).